The sequence spans 59 residues: UPF0434 protein Pnec_0311 (59 aa).

It belongs to the UPF0434 family.

The polypeptide is UPF0434 protein Pnec_0311 (Polynucleobacter necessarius subsp. necessarius (strain STIR1)).